Consider the following 306-residue polypeptide: Uricase (306 aa).

Residues K5 and T65 each act as charge relay system in the active site. Urate is bound by residues T65, D66, F175, R192, I240, Q241, and N267. The tract at residues 281 to 306 (AKVLREPPRPTGYQQFSMDRSDLEEQ) is disordered.

It belongs to the uricase family.

It catalyses the reaction urate + O2 + H2O = 5-hydroxyisourate + H2O2. It functions in the pathway purine metabolism; urate degradation; (S)-allantoin from urate: step 1/3. In terms of biological role, catalyzes the oxidation of uric acid to 5-hydroxyisourate, which is further processed to form (S)-allantoin. The chain is Uricase from Halalkalicoccus jeotgali (strain DSM 18796 / CECT 7217 / JCM 14584 / KCTC 4019 / B3).